A 354-amino-acid polypeptide reads, in one-letter code: Lipoyl synthase, mitochondrial (354 aa).

7 residues coordinate [4Fe-4S] cluster: Cys91, Cys96, Cys102, Cys122, Cys126, Cys129, and Ser337. The 220-residue stretch at 107-326 (DDSLATATIM…AEYSKKLGFL (220 aa)) folds into the Radical SAM core domain.

The protein belongs to the radical SAM superfamily. Lipoyl synthase family. It depends on [4Fe-4S] cluster as a cofactor.

The protein resides in the mitochondrion. It catalyses the reaction [[Fe-S] cluster scaffold protein carrying a second [4Fe-4S](2+) cluster] + N(6)-octanoyl-L-lysyl-[protein] + 2 oxidized [2Fe-2S]-[ferredoxin] + 2 S-adenosyl-L-methionine + 4 H(+) = [[Fe-S] cluster scaffold protein] + N(6)-[(R)-dihydrolipoyl]-L-lysyl-[protein] + 4 Fe(3+) + 2 hydrogen sulfide + 2 5'-deoxyadenosine + 2 L-methionine + 2 reduced [2Fe-2S]-[ferredoxin]. It functions in the pathway protein modification; protein lipoylation via endogenous pathway; protein N(6)-(lipoyl)lysine from octanoyl-[acyl-carrier-protein]: step 2/2. Its function is as follows. Catalyzes the radical-mediated insertion of two sulfur atoms into the C-6 and C-8 positions of the octanoyl moiety bound to the lipoyl domains of lipoate-dependent enzymes, thereby converting the octanoylated domains into lipoylated derivatives. This Caenorhabditis elegans protein is Lipoyl synthase, mitochondrial.